A 188-amino-acid polypeptide reads, in one-letter code: Protein-export protein SecB (188 aa).

Disordered stretches follow at residues 1–21 (MADE…EQPK) and 160–188 (RQKA…DTQQ). The segment covering 176 to 188 (SDSTAAQGSDTQQ) has biased composition (polar residues).

Belongs to the SecB family. As to quaternary structure, homotetramer, a dimer of dimers. One homotetramer interacts with 1 SecA dimer.

The protein localises to the cytoplasm. One of the proteins required for the normal export of preproteins out of the cell cytoplasm. It is a molecular chaperone that binds to a subset of precursor proteins, maintaining them in a translocation-competent state. It also specifically binds to its receptor SecA. The protein is Protein-export protein SecB of Alkalilimnicola ehrlichii (strain ATCC BAA-1101 / DSM 17681 / MLHE-1).